The primary structure comprises 194 residues: Gonadal protein gdl (194 aa).

Belongs to the gonadal family. In stage 6-14 egg chamber nurse cells and oocytes of adult females and spermatocyte cysts and bundles of maturing sperm of larval, pupal and adult males.

This is Gonadal protein gdl (gdl) from Drosophila melanogaster (Fruit fly).